The following is a 385-amino-acid chain: Putative mitochondrial carrier protein TRV_02148.2 (385 aa).

Solcar repeat units follow at residues 24–124 (SNTL…LHAR) and 130–210 (RTAG…LRRR). 5 consecutive transmembrane segments (helical) span residues 30-47 (GTAI…DSIL), 132-150 (AGNE…KLFT), 184-207 (WSAY…YLAL), 263-279 (YTIC…LEVI), and 294-310 (VVTV…LYML).

Belongs to the mitochondrial carrier (TC 2.A.29) family.

It is found in the mitochondrion inner membrane. May function as a mitochondrial transporter. The protein is Putative mitochondrial carrier protein TRV_02148.2 of Trichophyton verrucosum (strain HKI 0517).